Reading from the N-terminus, the 1098-residue chain is Eukaryotic translation initiation factor 3 subunit A (1098 aa).

The PCI domain maps to 324-503; the sequence is AQEQATRVLL…DCVRFGSSDA (180 aa). Residues 574–844 are a coiled coil; it reads TEIERIHRRK…ARQAVIDSQR (271 aa). Disordered regions lie at residues 599–648 and 805–1098; these read EKAA…KIKR and RAEK…NWRR. 3 stretches are compositionally biased toward basic and acidic residues: residues 608–648, 805–857, and 877–895; these read QAKR…KIKR, RAEK…REME, and MPQR…EPFR. Residues 905–914 show a composition bias toward polar residues; that stretch reads DSSWRSSAQP. 2 stretches are compositionally biased toward basic and acidic residues: residues 916–978 and 1054–1079; these read RKPD…ERGA and LPPR…RDGP. Over residues 1080–1098 the composition is skewed to low complexity; that stretch reads NRNSGANNAGNADSANWRR.

This sequence belongs to the eIF-3 subunit A family. As to quaternary structure, component of the eukaryotic translation initiation factor 3 (eIF-3) complex.

It localises to the cytoplasm. In terms of biological role, RNA-binding component of the eukaryotic translation initiation factor 3 (eIF-3) complex, which is involved in protein synthesis of a specialized repertoire of mRNAs and, together with other initiation factors, stimulates binding of mRNA and methionyl-tRNAi to the 40S ribosome. The eIF-3 complex specifically targets and initiates translation of a subset of mRNAs involved in cell proliferation. The protein is Eukaryotic translation initiation factor 3 subunit A of Caenorhabditis briggsae.